Consider the following 338-residue polypeptide: Protein FosB (338 aa).

2 disordered regions span residues 1–54 (MFQA…PGSF) and 80–179 (AQSQ…RREL). Polar residues predominate over residues 13 to 31 (SRCSSSPSAESQYLSSVDS). S27 bears the Phosphoserine mark. Low complexity predominate over residues 123 to 137 (PSTSTSTSGPVSARP). One can recognise a bZIP domain in the interval 155-218 (EEKRRVRRER…ERLEFVLVAH (64 aa)). A basic motif region spans residues 157-182 (KRRVRRERNKLAAAKCRNRRRELTDR). Residues 183 to 211 (LQAETDQLEEEKAELESEIAELQKEKERL) are leucine-zipper. Disordered stretches follow at residues 222-276 (CKIP…PPNL) and 315-338 (AGSQRTSGSEQPSDPLNSPSLLAL). Pro residues predominate over residues 256 to 265 (LPPPPPPPLP). A compositionally biased stretch (polar residues) spans 266–276 (FQSSRDAPPNL).

The protein belongs to the bZIP family. Fos subfamily. In terms of assembly, heterodimer; binds to DNA as heterodimer. Component of an AP-1 transcription factor complex; composed of FOS-JUN heterodimers. As part of the AP-1 transcription factor complex, forms heterodimers with JUN, JUNB or JUND, thereby binding to the AP-1 consensus sequence and stimulating transcription. Phosphorylated; phosphorylation is induced by chronic electroconvulsive seizure (ECS) treatment. As to expression, expressed in brain. Expressed in pyramidal cells in CA1 and CA3, in the dentate gyrus and the nucleus accumbens (at protein level).

Its subcellular location is the nucleus. Its function is as follows. Heterodimerizes with proteins of the JUN family to form an AP-1 transcription factor complex, thereby enhancing their DNA binding activity to an AP-1 consensus sequence 5'-TGA[GC]TCA-3' and enhancing their transcriptional activity. Exhibits transactivation activity in vitro. As part of the AP-1 complex, facilitates enhancer selection together with cell-type-specific transcription factors by collaboratively binding to nucleosomal enhancers and recruiting the SWI/SNF (BAF) chromatin remodeling complex to establish accessible chromatin. Together with JUN, plays a role in activation-induced cell death of T cells by binding to the AP-1 promoter site of FASLG/CD95L, and inducing its transcription in response to activation of the TCR/CD3 signaling pathway. Involved in the display of nurturing behavior towards newborns. May play a role in neurogenesis in the hippocampus and in learning and memory-related tasks by regulating the expression of various genes involved in neurogenesis, depression and epilepsy. Implicated in behavioral responses related to morphine reward and spatial memory. The polypeptide is Protein FosB (Rattus norvegicus (Rat)).